Consider the following 133-residue polypeptide: MQKIDKTLEEWRAMLDPEQYQVCRLKGTERPFTGKYNSEKRAGTYHCICCDLPLFDSNTKFDSGCGWPSFYAPIEDSAMIETRDTSHGMIRTEVTCAQCDAHLGHVFPDGPPPTGLRYCINSVCLDFKPRDGA.

Positions 8–130 constitute a MsrB domain; it reads LEEWRAMLDP…NSVCLDFKPR (123 aa). 4 residues coordinate Zn(2+): Cys-47, Cys-50, Cys-96, and Cys-99. Cys-119 acts as the Nucleophile in catalysis.

The protein belongs to the MsrB Met sulfoxide reductase family. Zn(2+) serves as cofactor.

The catalysed reaction is L-methionyl-[protein] + [thioredoxin]-disulfide + H2O = L-methionyl-(R)-S-oxide-[protein] + [thioredoxin]-dithiol. The sequence is that of Peptide methionine sulfoxide reductase MsrB from Pseudomonas putida (strain W619).